Reading from the N-terminus, the 449-residue chain is Elongation factor 1-alpha (449 aa).

The region spanning 5 to 230 (KVHMNLVVVG…DMLEPPVRPS (226 aa)) is the tr-type G domain. Residues 14–21 (GHVDAGKS) form a G1 region. 14–21 (GHVDAGKS) serves as a coordination point for GTP. The G2 stretch occupies residues 70–74 (GITID). Residues 91–94 (DAPG) are G3. GTP-binding positions include 91 to 95 (DAPGH) and 153 to 156 (NKMD). Residues 153 to 156 (NKMD) form a G4 region. The tract at residues 194–196 (SGW) is G5. 5-glutamyl glycerylphosphorylethanolamine is present on glutamate 362.

It belongs to the TRAFAC class translation factor GTPase superfamily. Classic translation factor GTPase family. EF-Tu/EF-1A subfamily. In terms of processing, phosphatidylethanolamine (PE) is a direct precursor of the ethanolamine-phosphoglycerol (EPG) moiety.

The protein localises to the cytoplasm. Its function is as follows. This protein promotes the GTP-dependent binding of aminoacyl-tRNA to the A-site of ribosomes during protein biosynthesis. The protein is Elongation factor 1-alpha (TEF1) of Trypanosoma brucei brucei.